We begin with the raw amino-acid sequence, 430 residues long: Bifunctional protein GlmU (430 aa).

The interval Met-1–Arg-227 is pyrophosphorylase. UDP-N-acetyl-alpha-D-glucosamine-binding positions include Lys-25, Gln-74, Gly-79–Thr-80, Tyr-104–Asp-106, Gly-140, Glu-154, Asn-168, and Asn-225. Position 106 (Asp-106) interacts with Mg(2+). Asn-225 contributes to the Mg(2+) binding site. The segment at Asn-228–Ser-248 is linker. Residues Gly-249–Lys-430 form an N-acetyltransferase region. Residues Arg-314 and Lys-332 each coordinate UDP-N-acetyl-alpha-D-glucosamine. The Proton acceptor role is filled by His-344. UDP-N-acetyl-alpha-D-glucosamine contacts are provided by Tyr-347 and Asn-358. Acetyl-CoA is bound by residues Ala-361, Asn-367–Tyr-368, Ala-404, and Arg-421.

It in the N-terminal section; belongs to the N-acetylglucosamine-1-phosphate uridyltransferase family. The protein in the C-terminal section; belongs to the transferase hexapeptide repeat family. As to quaternary structure, homotrimer. Requires Mg(2+) as cofactor.

It localises to the cytoplasm. The enzyme catalyses alpha-D-glucosamine 1-phosphate + acetyl-CoA = N-acetyl-alpha-D-glucosamine 1-phosphate + CoA + H(+). It catalyses the reaction N-acetyl-alpha-D-glucosamine 1-phosphate + UTP + H(+) = UDP-N-acetyl-alpha-D-glucosamine + diphosphate. Its pathway is nucleotide-sugar biosynthesis; UDP-N-acetyl-alpha-D-glucosamine biosynthesis; N-acetyl-alpha-D-glucosamine 1-phosphate from alpha-D-glucosamine 6-phosphate (route II): step 2/2. It participates in nucleotide-sugar biosynthesis; UDP-N-acetyl-alpha-D-glucosamine biosynthesis; UDP-N-acetyl-alpha-D-glucosamine from N-acetyl-alpha-D-glucosamine 1-phosphate: step 1/1. It functions in the pathway bacterial outer membrane biogenesis; LPS lipid A biosynthesis. In terms of biological role, catalyzes the last two sequential reactions in the de novo biosynthetic pathway for UDP-N-acetylglucosamine (UDP-GlcNAc). The C-terminal domain catalyzes the transfer of acetyl group from acetyl coenzyme A to glucosamine-1-phosphate (GlcN-1-P) to produce N-acetylglucosamine-1-phosphate (GlcNAc-1-P), which is converted into UDP-GlcNAc by the transfer of uridine 5-monophosphate (from uridine 5-triphosphate), a reaction catalyzed by the N-terminal domain. The sequence is that of Bifunctional protein GlmU from Wolbachia pipientis wMel.